Reading from the N-terminus, the 256-residue chain is Thiazole synthase (256 aa).

K96 serves as the catalytic Schiff-base intermediate with DXP. 1-deoxy-D-xylulose 5-phosphate is bound by residues G157, 183–184, and 205–206; these read AG and NT.

Belongs to the ThiG family. As to quaternary structure, homotetramer. Forms heterodimers with either ThiH or ThiS.

Its subcellular location is the cytoplasm. The enzyme catalyses [ThiS sulfur-carrier protein]-C-terminal-Gly-aminoethanethioate + 2-iminoacetate + 1-deoxy-D-xylulose 5-phosphate = [ThiS sulfur-carrier protein]-C-terminal Gly-Gly + 2-[(2R,5Z)-2-carboxy-4-methylthiazol-5(2H)-ylidene]ethyl phosphate + 2 H2O + H(+). Its pathway is cofactor biosynthesis; thiamine diphosphate biosynthesis. Catalyzes the rearrangement of 1-deoxy-D-xylulose 5-phosphate (DXP) to produce the thiazole phosphate moiety of thiamine. Sulfur is provided by the thiocarboxylate moiety of the carrier protein ThiS. In vitro, sulfur can be provided by H(2)S. This chain is Thiazole synthase, found in Bacillus cereus (strain 03BB102).